The following is a 293-amino-acid chain: Glutamyl-Q tRNA(Asp) synthetase (293 aa).

Residues 26–30 (RFAPS) and Asp-62 each bind L-glutamate. A 'HIGH' region motif is present at residues 29 to 39 (PSPTGLLHLGN). Zn(2+) is bound by residues Cys-118, Cys-120, Tyr-131, and Cys-135. Residues Tyr-178 and Arg-196 each coordinate L-glutamate. A 'KMSKS' region motif is present at residues 234 to 238 (KLSKR). Lys-237 contributes to the ATP binding site.

This sequence belongs to the class-I aminoacyl-tRNA synthetase family. GluQ subfamily. The cofactor is Zn(2+).

Catalyzes the tRNA-independent activation of glutamate in presence of ATP and the subsequent transfer of glutamate onto a tRNA(Asp). Glutamate is transferred on the 2-amino-5-(4,5-dihydroxy-2-cyclopenten-1-yl) moiety of the queuosine in the wobble position of the QUC anticodon. The polypeptide is Glutamyl-Q tRNA(Asp) synthetase (Synechococcus sp. (strain CC9605)).